The sequence spans 586 residues: Acyl-coenzyme A synthetase ACSM3, mitochondrial (586 aa).

The N-terminal 27 residues, 1–27 (MLARVTRKMLRHAKCFQRLAIFGSVRA), are a transit peptide targeting the mitochondrion. N6-succinyllysine is present on residues Lys73 and Lys106. Position 157 is an N6-acetyllysine (Lys157). ATP is bound by residues 235 to 243 (TSGTSGYPK), 374 to 379 (EGYGQT), Asp461, Arg476, and Lys572.

This sequence belongs to the ATP-dependent AMP-binding enzyme family. The cofactor is Mg(2+). Requires Mn(2+) as cofactor.

It localises to the mitochondrion. The protein localises to the mitochondrion matrix. It catalyses the reaction a medium-chain fatty acid + ATP + CoA = a medium-chain fatty acyl-CoA + AMP + diphosphate. It carries out the reaction propanoate + ATP + CoA = propanoyl-CoA + AMP + diphosphate. The catalysed reaction is butanoate + ATP + CoA = butanoyl-CoA + AMP + diphosphate. The enzyme catalyses 2-methylpropanoate + ATP + CoA = 2-methylpropanoyl-CoA + AMP + diphosphate. It catalyses the reaction 2-methylbutanoate + ATP + CoA = 2-methylbutanoyl-CoA + AMP + diphosphate. It carries out the reaction octanoate + ATP + CoA = octanoyl-CoA + AMP + diphosphate. Catalyzes the activation of fatty acids by CoA to produce an acyl-CoA, the first step in fatty acid metabolism. Capable of activating medium-chain fatty acids with a preference for isobutyrate among fatty acids with 2-6 carbon atoms. This is Acyl-coenzyme A synthetase ACSM3, mitochondrial (ACSM3) from Homo sapiens (Human).